A 275-amino-acid chain; its full sequence is Large ribosomal subunit protein uL2 (275 aa).

The tract at residues 222-275 is disordered; that stretch reads GVAMNPVDHPMGGGEGRSSGGRHPCSPWGMPTKGYKTRKNKTTDKFIVRKRNKR.

It belongs to the universal ribosomal protein uL2 family. Part of the 50S ribosomal subunit. Forms a bridge to the 30S subunit in the 70S ribosome.

In terms of biological role, one of the primary rRNA binding proteins. Required for association of the 30S and 50S subunits to form the 70S ribosome, for tRNA binding and peptide bond formation. It has been suggested to have peptidyltransferase activity; this is somewhat controversial. Makes several contacts with the 16S rRNA in the 70S ribosome. This Desulfatibacillum aliphaticivorans protein is Large ribosomal subunit protein uL2.